The primary structure comprises 313 residues: Glucosyl-dolichyl phosphate glucuronosyltransferase (313 aa).

A helical transmembrane segment spans residues Leu284–Thr304.

Belongs to the glycosyltransferase 2 family.

It localises to the cell membrane. The catalysed reaction is an archaeal dolichyl alpha-D-glucosyl phosphate + UDP-alpha-D-glucuronate = an archaeal dolichyl beta-D-glucuronosyl-(1-&gt;4)-alpha-D-glucosyl phosphate + UDP + H(+). The protein operates within cell surface structure biogenesis; S-layer biogenesis. In terms of biological role, involved in the protein N-glycosylation pathway responsible for the assembly and attachment of an N-linked pentasaccharide that decorates the S-layer glycoprotein and flagellins. Catalyzes the transfer of a glucuronate residue (GlcA) to a glucose residue already bound to a dolichol phosphate (DolP), a compound that serves as a glycan lipid carrier in Archaea. In vitro, is able to add GlcA to DolP-Glc in which the omega-position isoprene is not saturated. However, the likely physiological lipid substrate is alpha,omega-saturated. In Haloferax volcanii (strain ATCC 29605 / DSM 3757 / JCM 8879 / NBRC 14742 / NCIMB 2012 / VKM B-1768 / DS2) (Halobacterium volcanii), this protein is Glucosyl-dolichyl phosphate glucuronosyltransferase.